The primary structure comprises 418 residues: Magnesium-chelatase subunit ChlI-2, chloroplastic (418 aa).

The N-terminal 55 residues, 1-55, are a transit peptide targeting the chloroplast; sequence MASLLGRSPSSILTCPRISSPSSTSSMSHLCFGPEKLSGRIQFNPKKNRSRYHVS. V56 is subject to N-acetylvaline. 2 cysteine pairs are disulfide-bonded: C96–C187 and C348–C390. 113–120 is an ATP binding site; sequence GDRGTGKS.

Belongs to the Mg-chelatase subunits D/I family. As to quaternary structure, the magnesium chelatase complex is a heterotrimer consisting of subunits CHLI, CHLD and CHLH. In terms of tissue distribution, expressed in leaves.

It is found in the plastid. The protein localises to the chloroplast. It carries out the reaction protoporphyrin IX + Mg(2+) + ATP + H2O = Mg-protoporphyrin IX + ADP + phosphate + 3 H(+). It participates in porphyrin-containing compound metabolism; chlorophyll biosynthesis. Redox regulation; active in reducing conditions, inactive in oxidizing conditions. Thioredoxins f and m mediate the reversible reductive activation of oxidized CHLI2. Its function is as follows. Involved in chlorophyll biosynthesis. Catalyzes the insertion of magnesium ion into protoporphyrin IX to yield Mg-protoporphyrin IX. The reaction takes place in two steps, with an ATP-dependent activation followed by an ATP-dependent chelation step. Possesses low affinity for ATP and may play a limited role in chlorophyll biosynthesis, and contributes to the assembly of the Mg-chelatase complex. The protein is Magnesium-chelatase subunit ChlI-2, chloroplastic (CHLI2) of Arabidopsis thaliana (Mouse-ear cress).